The chain runs to 229 residues: Probable endo-1,4-beta-xylanase A (229 aa).

The signal sequence occupies residues 1–18; sequence MVSFKYLFLAASALGALA. 2 N-linked (GlcNAc...) asparagine glycosylation sites follow: Asn-30 and Asn-100. Residues 41-229 enclose the GH11 domain; it reads AGTPSSTGWN…SSGSSSITVY (189 aa). Glu-125 serves as the catalytic Nucleophile. Glu-216 (proton donor) is an active-site residue.

It belongs to the glycosyl hydrolase 11 (cellulase G) family.

The protein resides in the secreted. It carries out the reaction Endohydrolysis of (1-&gt;4)-beta-D-xylosidic linkages in xylans.. Its pathway is glycan degradation; xylan degradation. In terms of biological role, endo-1,4-beta-xylanase involved in the hydrolysis of xylan, a major structural heterogeneous polysaccharide found in plant biomass representing the second most abundant polysaccharide in the biosphere, after cellulose. This is Probable endo-1,4-beta-xylanase A (xlnA) from Aspergillus clavatus (strain ATCC 1007 / CBS 513.65 / DSM 816 / NCTC 3887 / NRRL 1 / QM 1276 / 107).